We begin with the raw amino-acid sequence, 314 residues long: 3'-5' exoribonuclease YhaM (314 aa).

The HD domain maps to 163-279 (HVVSMLDLAK…LHYIDNLDAK (117 aa)).

This sequence belongs to the YhaM family.

Shows a 3'-5' exoribonuclease activity. This Bacillus thuringiensis (strain Al Hakam) protein is 3'-5' exoribonuclease YhaM.